A 546-amino-acid chain; its full sequence is Chaperonin GroEL (546 aa).

Residues 30–33 (TLGP), Lys-51, 87–91 (DGTTT), Gly-415, 479–481 (NAA), and Asp-495 contribute to the ATP site. The tract at residues 526–546 (KEDAPMPGGMPGGMGGMGMDM) is disordered. Over residues 534–546 (GMPGGMGGMGMDM) the composition is skewed to gly residues.

It belongs to the chaperonin (HSP60) family. In terms of assembly, forms a cylinder of 14 subunits composed of two heptameric rings stacked back-to-back. Interacts with the co-chaperonin GroES.

The protein localises to the cytoplasm. The catalysed reaction is ATP + H2O + a folded polypeptide = ADP + phosphate + an unfolded polypeptide.. In terms of biological role, together with its co-chaperonin GroES, plays an essential role in assisting protein folding. The GroEL-GroES system forms a nano-cage that allows encapsulation of the non-native substrate proteins and provides a physical environment optimized to promote and accelerate protein folding. This Burkholderia cepacia (Pseudomonas cepacia) protein is Chaperonin GroEL.